The primary structure comprises 284 residues: Probable tRNA-splicing endonuclease subunit sen34 (284 aa).

Active-site residues include tyrosine 206, histidine 214, and lysine 245.

It belongs to the tRNA-intron endonuclease family. As to quaternary structure, heterotetramer composed of sen2, sen15, sen34 and sen54. Interacts directly with sen15.

It carries out the reaction pretRNA = a 3'-half-tRNA molecule with a 5'-OH end + a 5'-half-tRNA molecule with a 2',3'-cyclic phosphate end + an intron with a 2',3'-cyclic phosphate and a 5'-hydroxyl terminus.. In terms of biological role, constitutes one of the two catalytic subunit of the tRNA-splicing endonuclease complex, a complex responsible for identification and cleavage of the splice sites in pre-tRNA. It cleaves pre-tRNA at the 5'- and 3'-splice sites to release the intron. The products are an intron and two tRNA half-molecules bearing 2',3'-cyclic phosphate and 5'-OH termini. There are no conserved sequences at the splice sites, but the intron is invariably located at the same site in the gene, placing the splice sites an invariant distance from the constant structural features of the tRNA body. It probably carries the active site for 3'-splice site cleavage. In Schizosaccharomyces pombe (strain 972 / ATCC 24843) (Fission yeast), this protein is Probable tRNA-splicing endonuclease subunit sen34 (sen34).